The following is a 103-amino-acid chain: Cyanovirin-N homolog (103 aa).

It belongs to the cyanovirin-N family.

Functionally, mannose-binding lectin. The sequence is that of Cyanovirin-N homolog from Tuber borchii (White truffle).